Reading from the N-terminus, the 157-residue chain is MAKKNHQGLDANLIAQNKKARHDYTVTDTFEAGLVLTGTEIKSVRARRVTLKDGYAQFHNGELWLMNVHIAEFAGGNIFNHDPLRNRKLLLHKKELKKLQGELTAKGVTLVPLKMYLKHGYAKVLLGLAQGKHEYDKRNAIKKREQDRQIDRVMKHY.

This sequence belongs to the SmpB family.

The protein localises to the cytoplasm. Required for rescue of stalled ribosomes mediated by trans-translation. Binds to transfer-messenger RNA (tmRNA), required for stable association of tmRNA with ribosomes. tmRNA and SmpB together mimic tRNA shape, replacing the anticodon stem-loop with SmpB. tmRNA is encoded by the ssrA gene; the 2 termini fold to resemble tRNA(Ala) and it encodes a 'tag peptide', a short internal open reading frame. During trans-translation Ala-aminoacylated tmRNA acts like a tRNA, entering the A-site of stalled ribosomes, displacing the stalled mRNA. The ribosome then switches to translate the ORF on the tmRNA; the nascent peptide is terminated with the 'tag peptide' encoded by the tmRNA and targeted for degradation. The ribosome is freed to recommence translation, which seems to be the essential function of trans-translation. This is SsrA-binding protein from Limosilactobacillus fermentum (strain NBRC 3956 / LMG 18251) (Lactobacillus fermentum).